The primary structure comprises 197 residues: V-type ATP synthase subunit E 2 (197 aa).

This sequence belongs to the V-ATPase E subunit family.

Produces ATP from ADP in the presence of a proton gradient across the membrane. In Clostridium tetani (strain Massachusetts / E88), this protein is V-type ATP synthase subunit E 2.